A 150-amino-acid chain; its full sequence is UPF0756 membrane protein ABAYE1440 (150 aa).

The next 4 membrane-spanning stretches (helical) occupy residues 1 to 21, 45 to 65, 83 to 103, and 115 to 135; these read MLAQ…CGLL, FFPY…TIGV, FISF…WLGG, and VVAG…GVPV.

This sequence belongs to the UPF0756 family.

Its subcellular location is the cell membrane. This is UPF0756 membrane protein ABAYE1440 from Acinetobacter baumannii (strain AYE).